The sequence spans 316 residues: 4-hydroxy-3-methylbut-2-enyl diphosphate reductase (316 aa).

Residue cysteine 12 participates in [4Fe-4S] cluster binding. (2E)-4-hydroxy-3-methylbut-2-enyl diphosphate-binding residues include histidine 41 and histidine 74. Dimethylallyl diphosphate is bound by residues histidine 41 and histidine 74. Residues histidine 41 and histidine 74 each coordinate isopentenyl diphosphate. Cysteine 96 serves as a coordination point for [4Fe-4S] cluster. Histidine 124 contributes to the (2E)-4-hydroxy-3-methylbut-2-enyl diphosphate binding site. Dimethylallyl diphosphate is bound at residue histidine 124. Isopentenyl diphosphate is bound at residue histidine 124. Glutamate 126 acts as the Proton donor in catalysis. Residue threonine 169 coordinates (2E)-4-hydroxy-3-methylbut-2-enyl diphosphate. Residue cysteine 199 participates in [4Fe-4S] cluster binding. Serine 227, serine 228, asparagine 229, and serine 271 together coordinate (2E)-4-hydroxy-3-methylbut-2-enyl diphosphate. Positions 227, 228, 229, and 271 each coordinate dimethylallyl diphosphate. Serine 227, serine 228, asparagine 229, and serine 271 together coordinate isopentenyl diphosphate.

This sequence belongs to the IspH family. The cofactor is [4Fe-4S] cluster.

It catalyses the reaction isopentenyl diphosphate + 2 oxidized [2Fe-2S]-[ferredoxin] + H2O = (2E)-4-hydroxy-3-methylbut-2-enyl diphosphate + 2 reduced [2Fe-2S]-[ferredoxin] + 2 H(+). It carries out the reaction dimethylallyl diphosphate + 2 oxidized [2Fe-2S]-[ferredoxin] + H2O = (2E)-4-hydroxy-3-methylbut-2-enyl diphosphate + 2 reduced [2Fe-2S]-[ferredoxin] + 2 H(+). The protein operates within isoprenoid biosynthesis; dimethylallyl diphosphate biosynthesis; dimethylallyl diphosphate from (2E)-4-hydroxy-3-methylbutenyl diphosphate: step 1/1. It participates in isoprenoid biosynthesis; isopentenyl diphosphate biosynthesis via DXP pathway; isopentenyl diphosphate from 1-deoxy-D-xylulose 5-phosphate: step 6/6. Catalyzes the conversion of 1-hydroxy-2-methyl-2-(E)-butenyl 4-diphosphate (HMBPP) into a mixture of isopentenyl diphosphate (IPP) and dimethylallyl diphosphate (DMAPP). Acts in the terminal step of the DOXP/MEP pathway for isoprenoid precursor biosynthesis. The protein is 4-hydroxy-3-methylbut-2-enyl diphosphate reductase of Xanthomonas oryzae pv. oryzae (strain MAFF 311018).